Consider the following 239-residue polypeptide: Endolytic peptidoglycan transglycosylase RlpA (239 aa).

A signal peptide spans 1–25 (MTLTRKTLFLLTAAFGIHSFQTASA). One can recognise an SPOR domain in the interval 160 to 239 (VAENKDIFID…GMVRAVLTAG (80 aa)).

The protein belongs to the RlpA family.

Its function is as follows. Lytic transglycosylase with a strong preference for naked glycan strands that lack stem peptides. This is Endolytic peptidoglycan transglycosylase RlpA from Neisseria meningitidis serogroup A / serotype 4A (strain DSM 15465 / Z2491).